A 354-amino-acid polypeptide reads, in one-letter code: Ornithine carbamoyltransferase, catabolic (354 aa).

Residues 67-70 (STRT), Gln-94, Arg-118, and 145-148 (HPTQ) contribute to the carbamoyl phosphate site. L-ornithine-binding positions include Asn-177, Asp-241, and 245 to 246 (SM). Carbamoyl phosphate contacts are provided by residues 284-285 (CL) and Arg-329.

Belongs to the aspartate/ornithine carbamoyltransferase superfamily. OTCase family.

It localises to the cytoplasm. It carries out the reaction carbamoyl phosphate + L-ornithine = L-citrulline + phosphate + H(+). Its pathway is amino-acid degradation; L-arginine degradation via ADI pathway; carbamoyl phosphate from L-arginine: step 2/2. Functionally, reversibly catalyzes the transfer of the carbamoyl group from carbamoyl phosphate (CP) to the N(epsilon) atom of ornithine (ORN) to produce L-citrulline. In Lactococcus lactis subsp. cremoris (strain MG1363), this protein is Ornithine carbamoyltransferase, catabolic (arcB).